A 1445-amino-acid polypeptide reads, in one-letter code: Tensin-3 (1445 aa).

The 170-residue stretch at 1-170 (MEEGHGLDLT…QFLSGLLSGS (170 aa)) folds into the Phosphatase tensin-type domain. Residues 175–301 (ASPLFLHFVI…GKVELVFSAT (127 aa)) form the C2 tensin-type domain. Residue Thr323 is modified to Phosphothreonine. 2 positions are modified to phosphoserine: Ser332 and Ser361. The segment at 358–421 (RKKSSSDPGI…GTRRGLSAQE (64 aa)) is disordered. The span at 386 to 400 (TLSVSSDSGHSTASA) shows a compositional bias: polar residues. 2 positions are modified to phosphoserine: Ser440 and Ser516. The segment at 538–568 (VPDLGLGMDGPYERERTFGSREPKQPQPLLR) is disordered. Over residues 548–561 (PYERERTFGSREPK) the composition is skewed to basic and acidic residues. At Ser571 the chain carries Phosphoserine. Disordered stretches follow at residues 618 to 695 (DNPG…TLDI) and 717 to 769 (PTHM…QPLG). Thr632 is modified (phosphothreonine). 4 positions are modified to phosphoserine: Ser649, Ser660, Ser687, and Ser690. The span at 723–733 (LGSQANGSVSP) shows a compositional bias: polar residues. Ser735 and Ser776 each carry phosphoserine. The residue at position 780 (Tyr780) is a Phosphotyrosine. Phosphoserine is present on residues Ser811, Ser866, and Ser901. 2 disordered regions span residues 859–981 (ALRH…TRKD) and 1076–1127 (GHSS…PHSG). A compositionally biased stretch (pro residues) spans 864–873 (PFSPPEPPLS). The segment covering 914 to 935 (ASSTPSFQQAFASSCTISSNGP) has biased composition (polar residues). The span at 1099–1109 (PEKKRASEGDR) shows a compositional bias: basic and acidic residues. Low complexity predominate over residues 1110–1127 (SLGSVSPSSSGFSSPHSG). Phosphoserine is present on residues Ser1149 and Ser1154. The 111-residue stretch at 1172–1282 (WYKADISREQ…ALPCKLLIPE (111 aa)) folds into the SH2 domain. Residues Ser1293 and Ser1441 each carry the phosphoserine modification. In terms of domain architecture, PTB spans 1310-1444 (ACNVWYLNSV…SKVMIGSPKK (135 aa)).

Belongs to the PTEN phosphatase protein family. Interacts with EGFR; EGF promotes the interaction with EGFR. Interacts with PTK2/FAK1 and BCAR1. Tyrosine phosphorylation is critical for these interactions. Interacts with Rho GTPase-activating protein DLC1 and with the regulatory p85 subunit of the PI3K kinase complex; in resting cells, interacts (via C2 tensin-type domain) with DLC1 but, following growth factor stimulation, TNS3 is phosphorylated which leads to weakened interaction with DLC1 and enhanced interaction (via C2 tensin-type domain) with p85 while DLC1 interaction with PTEN increases. Interacts (when phosphorylated on the SH2 domain) with integrins ITGB1, ITGB3 and ITGB5 and with scaffolding protein PEAK1 (phosphorylated on 'Tyr-635'); mediates the association of PEAK1 with ITGB1, ITGB3 and ITGB5. Interacts (via N-terminus) with DOCK5 (via N-terminus); the interaction increases DOCK5 guanine nucleotide exchange activity towards Rac. Interacts with receptor tyrosine kinase MET. Post-translationally, phosphorylated on Ser/Thr and Tyr residues. Phosphorylated on Thr-323 in the C2-type tensin domain following EGF stimulation which changes its binding preference from DLC1 to the p85 regulatory subunit of the PI3K kinase complex. EGF induces tyrosine phosphorylation in a time- and dose-dependent manner. Phosphorylation of the SH2 domain enhances interaction with PEAK1. As to expression, expressed in umbilical vein endothelial cells, epithelial cells, and fibroblasts cells (at protein level). Highly expressed in thyroid, kidney and placenta. Low expression in heart, skeletal muscle, spleen, liver, and lung. Expressed at higher levels in tonsil-derived mesenchymal stem cells (MSCs) than in adipose tissue-derived MSCs or bone marrow-derived MSCs. Expressed in tumor endothelial cells. Expression seems to be down-regulated in thyroid tumor tissues and in anaplastic carcinomas.

It is found in the cell junction. The protein localises to the focal adhesion. Its subcellular location is the cell projection. It localises to the podosome. May act as a protein phosphatase and/or a lipid phosphatase. Involved in the dissociation of the integrin-tensin-actin complex. EGF activates TNS4 and down-regulates TNS3 which results in capping the tail of ITGB1. Increases DOCK5 guanine nucleotide exchange activity towards Rac and plays a role in osteoclast podosome organization. Enhances RHOA activation in the presence of DLC1. Required for growth factor-induced epithelial cell migration; growth factor stimulation induces TNS3 phosphorylation which changes its binding preference from DLC1 to the p85 regulatory subunit of the PI3K kinase complex, displacing PI3K inhibitor PTEN and resulting in translocation of the TNS3-p85 complex to the leading edge of migrating cells to promote RAC1 activation. Meanwhile, PTEN switches binding preference from p85 to DLC1 and the PTEN-DLC1 complex translocates to the posterior of migrating cells to activate RHOA. Acts as an adapter protein by bridging the association of scaffolding protein PEAK1 with integrins ITGB1, ITGB3 and ITGB5 which contributes to the promotion of cell migration. Controls tonsil-derived mesenchymal stem cell proliferation and differentiation by regulating the activity of integrin ITGB1. The polypeptide is Tensin-3 (TNS3) (Homo sapiens (Human)).